We begin with the raw amino-acid sequence, 477 residues long: Protoporphyrinogen oxidase (477 aa).

FAD-binding positions include 9 to 14, tryptophan 42, 57 to 60, valine 257, alanine 449, and 454 to 456; these read GGGISG, GPRG, and VAV.

Belongs to the protoporphyrinogen/coproporphyrinogen oxidase family. Protoporphyrinogen oxidase subfamily. As to quaternary structure, monomer. Homodimer. FAD serves as cofactor.

The protein resides in the mitochondrion inner membrane. It carries out the reaction protoporphyrinogen IX + 3 O2 = protoporphyrin IX + 3 H2O2. It participates in porphyrin-containing compound metabolism; protoporphyrin-IX biosynthesis; protoporphyrin-IX from protoporphyrinogen-IX: step 1/1. Functionally, catalyzes the 6-electron oxidation of protoporphyrinogen-IX to form protoporphyrin-IX. The polypeptide is Protoporphyrinogen oxidase (PPOX) (Macaca fascicularis (Crab-eating macaque)).